The sequence spans 458 residues: Phosphoglucosamine mutase (458 aa).

Ser106 serves as the catalytic Phosphoserine intermediate. Mg(2+) is bound by residues Ser106, Asp247, Asp249, and Asp251. A Phosphoserine modification is found at Ser106.

Belongs to the phosphohexose mutase family. Requires Mg(2+) as cofactor. Activated by phosphorylation.

The catalysed reaction is alpha-D-glucosamine 1-phosphate = D-glucosamine 6-phosphate. Its function is as follows. Catalyzes the conversion of glucosamine-6-phosphate to glucosamine-1-phosphate. The protein is Phosphoglucosamine mutase of Chlamydia abortus (strain DSM 27085 / S26/3) (Chlamydophila abortus).